The primary structure comprises 165 residues: Endoribonuclease YbeY (165 aa).

Residues His-119, His-123, and His-129 each coordinate Zn(2+).

Belongs to the endoribonuclease YbeY family. It depends on Zn(2+) as a cofactor.

It is found in the cytoplasm. Its function is as follows. Single strand-specific metallo-endoribonuclease involved in late-stage 70S ribosome quality control and in maturation of the 3' terminus of the 16S rRNA. This Streptomyces coelicolor (strain ATCC BAA-471 / A3(2) / M145) protein is Endoribonuclease YbeY.